The sequence spans 63 residues: Large ribosomal subunit protein uL29 (63 aa).

The protein belongs to the universal ribosomal protein uL29 family.

In Bordetella petrii (strain ATCC BAA-461 / DSM 12804 / CCUG 43448), this protein is Large ribosomal subunit protein uL29.